The chain runs to 181 residues: MKQLLDFLPLIIFFAVYKFFDIYIASGALIAATALQLVVTYALYKKLEKMHLITFAMVTVFGTLTLVFHDDAFIKWKVTIIYALFALALGVSQLLNKSILKSMLGKEMKVADKIWAHVTWYWVSFFAICGLVNIYVAFRLPLETWVNFKVFGLTALTLINTVITVFYLYKHLPEDQRKELK.

Helical transmembrane passes span 10–30 (LIIF…GALI), 50–70 (MHLI…VFHD), 72–92 (AFIK…LGVS), 118–138 (VTWY…YVAF), and 148–168 (FKVF…VFYL).

The protein belongs to the YciB family.

The protein localises to the cell inner membrane. Plays a role in cell envelope biogenesis, maintenance of cell envelope integrity and membrane homeostasis. The polypeptide is Inner membrane-spanning protein YciB (Shewanella sp. (strain ANA-3)).